Consider the following 208-residue polypeptide: Large ribosomal subunit protein eL13 (208 aa).

Residues Ser-177 and Ser-180 each carry the phosphoserine modification.

Belongs to the eukaryotic ribosomal protein eL13 family. In terms of assembly, component of the large ribosomal subunit (LSU). Mature yeast ribosomes consist of a small (40S) and a large (60S) subunit. The 40S small subunit contains 1 molecule of ribosomal RNA (18S rRNA) and at least 33 different proteins. The large 60S subunit contains 3 rRNA molecules (25S, 5.8S and 5S rRNA) and at least 46 different proteins.

The protein resides in the cytoplasm. Functionally, component of the ribosome, a large ribonucleoprotein complex responsible for the synthesis of proteins in the cell. The small ribosomal subunit (SSU) binds messenger RNAs (mRNAs) and translates the encoded message by selecting cognate aminoacyl-transfer RNA (tRNA) molecules. The large subunit (LSU) contains the ribosomal catalytic site termed the peptidyl transferase center (PTC), which catalyzes the formation of peptide bonds, thereby polymerizing the amino acids delivered by tRNAs into a polypeptide chain. The nascent polypeptides leave the ribosome through a tunnel in the LSU and interact with protein factors that function in enzymatic processing, targeting, and the membrane insertion of nascent chains at the exit of the ribosomal tunnel. This chain is Large ribosomal subunit protein eL13 (rpl13), found in Schizosaccharomyces pombe (strain 972 / ATCC 24843) (Fission yeast).